Here is a 378-residue protein sequence, read N- to C-terminus: Protein arginine N-methyltransferase 6 (378 aa).

A disordered region spans residues 1–46 (MSLSKKRKLESGDSGGAGAGGEGAEEENGGEQEAAPPRPRRTKSER). The span at 13 to 22 (DSGGAGAGGE) shows a compositional bias: gly residues. The residue at position 38 (arginine 38) is an Asymmetric dimethylarginine; by autocatalysis. The 331-residue stretch at 47–377 (DQLYYECYSD…EEKTKDFAME (331 aa)) folds into the SAM-dependent MTase PRMT-type domain. The S-adenosyl-L-methionine site is built by histidine 60, arginine 69, glycine 93, glutamate 115, and glutamate 144. Active-site residues include glutamate 158 and glutamate 167.

Belongs to the class I-like SAM-binding methyltransferase superfamily. Protein arginine N-methyltransferase family. PRMT6 subfamily. Interacts with (and methylates) HIV-1 Tat, Rev and Nucleocapsid protein p7 (NC). Interacts with EPB41L3 and NCOA1. In terms of processing, automethylation enhances its stability.

The protein resides in the nucleus. It catalyses the reaction L-arginyl-[protein] + 2 S-adenosyl-L-methionine = N(omega),N(omega)-dimethyl-L-arginyl-[protein] + 2 S-adenosyl-L-homocysteine + 2 H(+). Arginine methyltransferase that can catalyze the formation of both omega-N monomethylarginine (MMA) and asymmetrical dimethylarginine (aDMA), with a strong preference for the formation of aDMA. Preferentially methylates arginyl residues present in a glycine and arginine-rich domain and displays preference for monomethylated substrates. Specifically mediates the asymmetric dimethylation of histone H3 'Arg-2' to form H3R2me2a. H3R2me2a represents a specific tag for epigenetic transcriptional repression and is mutually exclusive with methylation on histone H3 'Lys-4' (H3K4me2 and H3K4me3). Acts as a transcriptional repressor of various genes such as HOXA2, THBS1 and TP53. Repression of TP53 blocks cellular senescence. Also methylates histone H2A and H4 'Arg-3' (H2AR3me and H4R3me, respectively). Acts as a regulator of DNA base excision during DNA repair by mediating the methylation of DNA polymerase beta (POLB), leading to the stimulation of its polymerase activity by enhancing DNA binding and processivity. Methylates HMGA1. Regulates alternative splicing events. Acts as a transcriptional coactivator of a number of steroid hormone receptors including ESR1, ESR2, PGR and NR3C1. Promotes fasting-induced transcriptional activation of the gluconeogenic program through methylation of the CRTC2 transcription coactivator. Methylates GPS2, protecting GPS2 from ubiquitination and degradation. Methylates SIRT7, inhibiting SIRT7 histone deacetylase activity and promoting mitochondria biogenesis. The protein is Protein arginine N-methyltransferase 6 (Prmt6) of Mus musculus (Mouse).